Consider the following 491-residue polypeptide: Probable glycine dehydrogenase (decarboxylating) subunit 2 (491 aa).

K273 bears the N6-(pyridoxal phosphate)lysine mark.

Belongs to the GcvP family. C-terminal subunit subfamily. The glycine cleavage system is composed of four proteins: P, T, L and H. In this organism, the P 'protein' is a heterodimer of two subunits. It depends on pyridoxal 5'-phosphate as a cofactor.

It carries out the reaction N(6)-[(R)-lipoyl]-L-lysyl-[glycine-cleavage complex H protein] + glycine + H(+) = N(6)-[(R)-S(8)-aminomethyldihydrolipoyl]-L-lysyl-[glycine-cleavage complex H protein] + CO2. The glycine cleavage system catalyzes the degradation of glycine. The P protein binds the alpha-amino group of glycine through its pyridoxal phosphate cofactor; CO(2) is released and the remaining methylamine moiety is then transferred to the lipoamide cofactor of the H protein. In Bacillus cereus (strain B4264), this protein is Probable glycine dehydrogenase (decarboxylating) subunit 2.